A 231-amino-acid polypeptide reads, in one-letter code: 2-C-methyl-D-erythritol 4-phosphate cytidylyltransferase (231 aa).

Belongs to the IspD/TarI cytidylyltransferase family. IspD subfamily.

It carries out the reaction 2-C-methyl-D-erythritol 4-phosphate + CTP + H(+) = 4-CDP-2-C-methyl-D-erythritol + diphosphate. Its pathway is isoprenoid biosynthesis; isopentenyl diphosphate biosynthesis via DXP pathway; isopentenyl diphosphate from 1-deoxy-D-xylulose 5-phosphate: step 2/6. Catalyzes the formation of 4-diphosphocytidyl-2-C-methyl-D-erythritol from CTP and 2-C-methyl-D-erythritol 4-phosphate (MEP). This chain is 2-C-methyl-D-erythritol 4-phosphate cytidylyltransferase, found in Bacillus licheniformis (strain ATCC 14580 / DSM 13 / JCM 2505 / CCUG 7422 / NBRC 12200 / NCIMB 9375 / NCTC 10341 / NRRL NRS-1264 / Gibson 46).